A 309-amino-acid chain; its full sequence is Ribonuclease Z (309 aa).

Zn(2+)-binding residues include His63, His65, Asp67, His68, His145, Asp216, and His274. The active-site Proton acceptor is the Asp67.

This sequence belongs to the RNase Z family. Homodimer. The cofactor is Zn(2+).

The catalysed reaction is Endonucleolytic cleavage of RNA, removing extra 3' nucleotides from tRNA precursor, generating 3' termini of tRNAs. A 3'-hydroxy group is left at the tRNA terminus and a 5'-phosphoryl group is left at the trailer molecule.. Functionally, zinc phosphodiesterase, which displays some tRNA 3'-processing endonuclease activity. Probably involved in tRNA maturation, by removing a 3'-trailer from precursor tRNA. The chain is Ribonuclease Z from Streptococcus equi subsp. zooepidemicus (strain H70).